Consider the following 363-residue polypeptide: DNA primase small subunit PriS (363 aa).

Active-site residues include Asp105, Asp107, and Asp265.

This sequence belongs to the eukaryotic-type primase small subunit family. Heterodimer of a small subunit (PriS) and a large subunit (PriL). Mg(2+) serves as cofactor. Requires Mn(2+) as cofactor.

Its function is as follows. Catalytic subunit of DNA primase, an RNA polymerase that catalyzes the synthesis of short RNA molecules used as primers for DNA polymerase during DNA replication. The small subunit contains the primase catalytic core and has DNA synthesis activity on its own. Binding to the large subunit stabilizes and modulates the activity, increasing the rate of DNA synthesis while decreasing the length of the DNA fragments, and conferring RNA synthesis capability. The DNA polymerase activity may enable DNA primase to also catalyze primer extension after primer synthesis. May also play a role in DNA repair. The polypeptide is DNA primase small subunit PriS (Methanococcus maripaludis (strain C7 / ATCC BAA-1331)).